The chain runs to 76 residues: Toxin Acra III-1 (76 aa).

The 64-residue stretch at Pro-4 to Thr-67 folds into the LCN-type CS-alpha/beta domain. 3 disulfides stabilise this stretch: Cys-18/Cys-41, Cys-27/Cys-46, and Cys-31/Cys-48.

It belongs to the long (3 C-C) scorpion toxin superfamily. Sodium channel inhibitor family. Beta subfamily. In terms of tissue distribution, expressed by the venom gland.

It is found in the secreted. Its function is as follows. Binds to sodium channels (Nav) and affects the channel activation process. This Androctonus crassicauda (Arabian fat-tailed scorpion) protein is Toxin Acra III-1.